A 105-amino-acid chain; its full sequence is Malonate decarboxylase acyl carrier protein (105 aa).

Ser28 carries the post-translational modification O-(phosphoribosyl dephospho-coenzyme A)serine.

Belongs to the MdcC family. In terms of processing, covalently binds the prosthetic group of malonate decarboxylase.

Its subcellular location is the cytoplasm. Its function is as follows. Subunit of malonate decarboxylase, it is an acyl carrier protein to which acetyl and malonyl thioester residues are bound via a 2'-(5''-phosphoribosyl)-3'-dephospho-CoA prosthetic group and turn over during the catalytic mechanism. This chain is Malonate decarboxylase acyl carrier protein, found in Xanthomonas euvesicatoria pv. vesicatoria (strain 85-10) (Xanthomonas campestris pv. vesicatoria).